The primary structure comprises 266 residues: Glutamate racemase (266 aa).

Residues 9 to 10 and 41 to 42 contribute to the substrate site; these read DS and YG. C72 (proton donor/acceptor) is an active-site residue. Position 73–74 (73–74) interacts with substrate; that stretch reads NT. C184 acts as the Proton donor/acceptor in catalysis. Residue 185 to 186 participates in substrate binding; that stretch reads TH.

The protein belongs to the aspartate/glutamate racemases family.

It carries out the reaction L-glutamate = D-glutamate. It participates in cell wall biogenesis; peptidoglycan biosynthesis. Its function is as follows. Provides the (R)-glutamate required for cell wall biosynthesis. This is Glutamate racemase from Staphylococcus haemolyticus.